A 397-amino-acid polypeptide reads, in one-letter code: Elongation factor Tu (397 aa).

Positions 10–206 constitute a tr-type G domain; it reads KPHVNIGTIG…EVDAYIPTPE (197 aa). Positions 19 to 26 are G1; it reads GHVDHGKT. 19–26 provides a ligand contact to GTP; the sequence is GHVDHGKT. T26 serves as a coordination point for Mg(2+). The G2 stretch occupies residues 60–64; that stretch reads GITIN. The interval 81-84 is G3; the sequence is DCPG. GTP contacts are provided by residues 81–85 and 136–139; these read DCPGH and NKAD. A G4 region spans residues 136–139; sequence NKAD. Residues 174 to 176 are G5; sequence SAL.

The protein belongs to the TRAFAC class translation factor GTPase superfamily. Classic translation factor GTPase family. EF-Tu/EF-1A subfamily. As to quaternary structure, monomer.

It is found in the cytoplasm. The enzyme catalyses GTP + H2O = GDP + phosphate + H(+). Its function is as follows. GTP hydrolase that promotes the GTP-dependent binding of aminoacyl-tRNA to the A-site of ribosomes during protein biosynthesis. In Clostridium acetobutylicum (strain ATCC 824 / DSM 792 / JCM 1419 / IAM 19013 / LMG 5710 / NBRC 13948 / NRRL B-527 / VKM B-1787 / 2291 / W), this protein is Elongation factor Tu.